A 129-amino-acid chain; its full sequence is SPbeta prophage-derived protein NrdI (129 aa).

This sequence belongs to the NrdI family.

Functionally, probably involved in ribonucleotide reductase function. The polypeptide is SPbeta prophage-derived protein NrdI (nrdIB) (Bacillus subtilis (strain 168)).